Reading from the N-terminus, the 418-residue chain is NADH-quinone oxidoreductase subunit D (418 aa).

It belongs to the complex I 49 kDa subunit family. As to quaternary structure, NDH-1 is composed of 14 different subunits. Subunits NuoB, C, D, E, F, and G constitute the peripheral sector of the complex.

Its subcellular location is the cell inner membrane. It catalyses the reaction a quinone + NADH + 5 H(+)(in) = a quinol + NAD(+) + 4 H(+)(out). NDH-1 shuttles electrons from NADH, via FMN and iron-sulfur (Fe-S) centers, to quinones in the respiratory chain. The immediate electron acceptor for the enzyme in this species is believed to be ubiquinone. Couples the redox reaction to proton translocation (for every two electrons transferred, four hydrogen ions are translocated across the cytoplasmic membrane), and thus conserves the redox energy in a proton gradient. The chain is NADH-quinone oxidoreductase subunit D from Bordetella avium (strain 197N).